Here is a 378-residue protein sequence, read N- to C-terminus: 8-demethyl-8-alpha-L-rhamnosyl tetracenomycin-C 2'-O-methyltransferase (378 aa).

S-adenosyl-L-methionine-binding positions include 195-201 (EIGVGGY), Ser210, Asp227, 245-246 (DQ), and Asp268. Asp268 lines the Mg(2+) pocket. His271 serves as the catalytic Proton acceptor. Mg(2+) is bound by residues Glu296 and Asp297.

The protein belongs to the methyltransferase OleY/MycE family. Mg(2+) serves as cofactor.

The enzyme catalyses 8-demethyl-8-alpha-L-rhamnosyl-tetracenomycin C + S-adenosyl-L-methionine = 8-demethyl-8-(2-O-methyl-alpha-L-rhamnosyl)-tetracenomycin C + S-adenosyl-L-homocysteine + H(+). It participates in antibiotic biosynthesis. Functionally, O-methyltransferase involved in the biosynthesis of the permethylated L-rhamnose moiety of elloramycin, an antitumor polyketide. Mediates the methylation of the hydroxy groups at the 2'-position after the sugar moiety has been attached to the aglycon. The chain is 8-demethyl-8-alpha-L-rhamnosyl tetracenomycin-C 2'-O-methyltransferase from Streptomyces olivaceus.